Here is a 529-residue protein sequence, read N- to C-terminus: MDSDEGYNYEFDDEEECSEDSGADEHEDDLELGEVELVEAGLSGSERAGICGEGGGSALGPGPGGEEEEDYRYEVLTAEQILQHMVECIREVNEVIQNPATITRILLSHFNWDKEKLMERYFDGNLEKLFSECHVINPSKKSRTRQMNTRSSAQDMPCQICYLNYPNSYFTGLECGHKFCMQCWSEYLTTKIIEEGMGQTISCPAHGCDILVDDNTVMRLITDSKVKLKYQHLITNSFVECNRLLKWCPAPDCHHVVKVQYPDAKPVRCKCGRQFCFNCGENWHDPVKCKWLKKWIKKCDDDSETSNWIAANTKECPKCHVTIEKDGGCNHMVCRNQNCKAEFCWVCLGPWEPHGSAWYNCNRYNEDDAKAARDAQERSRAALQRYLFYCNRYMNHMQSLRFEHKLYAQVKQKMEEMQQHNMSWIEVQFLKKAVDVLCQCRSTLMYTYVFAFYLKKNNQSIIFENNQADLENATEVLSGYLERDISQDSLQDIKQKVQDKYRYCESRRRVLLLHVHEGYEKDLWEYIED.

2 disordered regions span residues 1-30 and 49-68; these read MDSDEGYNYEFDDEEECSEDSGADEHEDDL and GICGEGGGSALGPGPGGEEE. The span at 51-64 shows a compositional bias: gly residues; it reads CGEGGGSALGPGPG. A UBA-like region spans residues 77–125; that stretch reads TAEQILQHMVECIREVNEVIQNPATITRILLSHFNWDKEKLMERYFDGN. Residues 154–365 are TRIAD supradomain; sequence QDMPCQICYL…SAWYNCNRYN (212 aa). Zn(2+) contacts are provided by Cys158, Cys161, Cys175, His177, Cys180, Cys183, Cys203, Cys208, Cys248, Cys253, Cys269, Cys271, Cys276, Cys279, His284, Cys289, Cys316, and Cys319. The RING-type 1 zinc finger occupies 158–208; the sequence is CQICYLNYPNSYFTGLECGHKFCMQCWSEYLTTKIIEEGMGQTISCPAHGC. An IBR-type zinc finger spans residues 228-289; the sequence is LKYQHLITNS…GENWHDPVKC (62 aa). The RING-type 2; atypical zinc-finger motif lies at 316-347; that stretch reads CPKCHVTIEKDGGCNHMVCRNQNCKAEFCWVC. The active site involves Cys329. The Zn(2+) site is built by Cys334, Cys339, Cys344, Cys347, His354, and Cys361. The tract at residues 380–529 is ariadne domain; sequence RAALQRYLFY…EKDLWEYIED (150 aa).

This sequence belongs to the RBR family. Ariadne subfamily. Interacts (via the first RING-type zinc finger) with ube2l3. Associates with cullin-RING ubiquitin ligase (CRL) complexes containing neddylated cullin.

It is found in the cytoplasm. The protein resides in the nucleus. It catalyses the reaction [E2 ubiquitin-conjugating enzyme]-S-ubiquitinyl-L-cysteine + [acceptor protein]-L-lysine = [E2 ubiquitin-conjugating enzyme]-L-cysteine + [acceptor protein]-N(6)-ubiquitinyl-L-lysine.. Its pathway is protein modification; protein ubiquitination. Autoinhibited by the ariadne domain, which masks the second RING-type zinc finger that contains the active site and inhibits the E3 activity. Inhibition is relieved upon binding to neddylated cullin-RING ubiquitin ligase complexes, which activate the E3 ligase activity of ARIH1. E3 ubiquitin-protein ligase, which catalyzes ubiquitination of target proteins together with ubiquitin-conjugating enzyme E2 ube2l3. Acts as an atypical E3 ubiquitin-protein ligase by working together with cullin-RING ubiquitin ligase (CRL) complexes and initiating ubiquitination of CRL substrates: associates with CRL complexes and specifically mediates addition of the first ubiquitin on CRLs targets. The initial ubiquitin is then elongated. E3 ubiquitin-protein ligase activity is activated upon binding to neddylated cullin-RING ubiquitin ligase complexes. In Xenopus tropicalis (Western clawed frog), this protein is E3 ubiquitin-protein ligase arih1 (arih1).